We begin with the raw amino-acid sequence, 159 residues long: Ribosomal RNA large subunit methyltransferase H (159 aa).

Residues leucine 76, glycine 108, and phenylalanine 127–leucine 132 contribute to the S-adenosyl-L-methionine site.

Belongs to the RNA methyltransferase RlmH family. In terms of assembly, homodimer.

The protein resides in the cytoplasm. It carries out the reaction pseudouridine(1915) in 23S rRNA + S-adenosyl-L-methionine = N(3)-methylpseudouridine(1915) in 23S rRNA + S-adenosyl-L-homocysteine + H(+). Specifically methylates the pseudouridine at position 1915 (m3Psi1915) in 23S rRNA. This Listeria monocytogenes serotype 4b (strain CLIP80459) protein is Ribosomal RNA large subunit methyltransferase H.